The chain runs to 237 residues: Flagellar L-ring protein (237 aa).

Residues 1–24 form the signal peptide; the sequence is MNRLSVPRFSVLIASLCGITLLSG. Cys-25 is lipidated: N-palmitoyl cysteine. Residue Cys-25 is the site of S-diacylglycerol cysteine attachment.

It belongs to the FlgH family. As to quaternary structure, the basal body constitutes a major portion of the flagellar organelle and consists of four rings (L,P,S, and M) mounted on a central rod.

The protein resides in the cell outer membrane. The protein localises to the bacterial flagellum basal body. In terms of biological role, assembles around the rod to form the L-ring and probably protects the motor/basal body from shearing forces during rotation. In Pseudomonas syringae pv. syringae (strain B728a), this protein is Flagellar L-ring protein.